Consider the following 90-residue polypeptide: Movement protein (90 aa).

A helical membrane pass occupies residues 32 to 52 (FVFVTFGLLIAVGVAWLAYTL).

Belongs to the mastrevirus movement protein family. Interacts with the capsid protein (CP). Part of a MP-CP-viral DNA complex.

It localises to the host membrane. Involved in the viral transport within, and between cells. The sequence is that of Movement protein from Wheat dwarf virus (isolate Sweden) (WDV).